We begin with the raw amino-acid sequence, 372 residues long: F-box/kelch-repeat protein At2g44630 (372 aa).

Polar residues predominate over residues 1-13 (MSNADEPPQKTNQ). Residues 1-21 (MSNADEPPQKTNQPPSSSLTP) are disordered. The region spanning 21 to 67 (PPSLFSLPVDIVLNILALVPKRYYPILCCVSKSLRSLIRSPEIHKTR) is the F-box domain. Kelch repeat units follow at residues 136–181 (EIYC…LVGG) and 183–228 (IYVI…SVSL).

This chain is F-box/kelch-repeat protein At2g44630, found in Arabidopsis thaliana (Mouse-ear cress).